Consider the following 488-residue polypeptide: UDP-glycosyltransferase 85A3 (488 aa).

UDP-alpha-D-glucose is bound by residues S306, 363-365 (CPQ), 380-388 (HCGWNSTLE), and 402-405 (FAEQ).

The protein belongs to the UDP-glycosyltransferase family. In terms of tissue distribution, expressed in roots and flowers.

The chain is UDP-glycosyltransferase 85A3 (UGT85A3) from Arabidopsis thaliana (Mouse-ear cress).